The following is a 387-amino-acid chain: 3-ketoacyl-CoA thiolase (387 aa).

The active-site Acyl-thioester intermediate is the C91. Residues H343 and C373 each act as proton acceptor in the active site.

Belongs to the thiolase-like superfamily. Thiolase family. In terms of assembly, heterotetramer of two alpha chains (FadB) and two beta chains (FadA).

Its subcellular location is the cytoplasm. It catalyses the reaction an acyl-CoA + acetyl-CoA = a 3-oxoacyl-CoA + CoA. It participates in lipid metabolism; fatty acid beta-oxidation. Functionally, catalyzes the final step of fatty acid oxidation in which acetyl-CoA is released and the CoA ester of a fatty acid two carbons shorter is formed. This Erwinia tasmaniensis (strain DSM 17950 / CFBP 7177 / CIP 109463 / NCPPB 4357 / Et1/99) protein is 3-ketoacyl-CoA thiolase.